The chain runs to 104 residues: Protein P-30 (104 aa).

Pyrrolidone carboxylic acid is present on Q1. The active-site Proton acceptor is the H10. Intrachain disulfides connect C19–C68, C30–C75, C48–C90, and C87–C104. Residue 31-35 participates in substrate binding; the sequence is KDKNT. The active-site Proton donor is H97.

The protein belongs to the pancreatic ribonuclease family.

Functionally, basic protein with antiproliferative/cytotoxic activity against several tumor cell lines in vitro, as well as antitumor in vivo. It exhibits a ribonuclease-like activity against high molecular weight ribosomal RNA. In Lithobates pipiens (Northern leopard frog), this protein is Protein P-30.